The following is a 413-amino-acid chain: Calsequestrin-2 (413 aa).

An N-terminal signal peptide occupies residues 1 to 19; it reads MKRIYLLVVGLYLLSFSRA. Tyrosine 282 is modified (phosphotyrosine). N-linked (GlcNAc...) asparagine glycosylation occurs at asparagine 335. The tract at residues 365-413 is disordered; the sequence is VLSGKINTEDDDNEDEDDDGDNDNDDDDDDDDNSDEDNDDSDDDDDDDE. The span at 373–413 shows a compositional bias: acidic residues; that stretch reads EDDDNEDEDDDGDNDNDDDDDDDDNSDEDNDDSDDDDDDDE. Serine 398 and serine 405 each carry phosphoserine.

This sequence belongs to the calsequestrin family. As to quaternary structure, monomer, homodimer and homooligomer. Mostly monomeric in the absence of calcium. Forms higher oligomers in a calcium-dependent manner. Dimers associate to form tetramers, that then form linear homomer chains. Interacts with ASPH and TRDN. Post-translationally, phosphorylation in the C-terminus, probably by CK2, moderately increases calcium buffering capacity. N-glycosylated. In terms of tissue distribution, detected in stomach and vas deferens (at protein level).

It is found in the sarcoplasmic reticulum lumen. Its function is as follows. Calsequestrin is a high-capacity, moderate affinity, calcium-binding protein and thus acts as an internal calcium store in muscle. Calcium ions are bound by clusters of acidic residues at the protein surface, especially at the interface between subunits. Can bind around 60 Ca(2+) ions. Regulates the release of lumenal Ca(2+) via the calcium release channel RYR2; this plays an important role in triggering muscle contraction. Plays a role in excitation-contraction coupling in the heart and in regulating the rate of heart beats. The chain is Calsequestrin-2 (Casq2) from Rattus norvegicus (Rat).